A 134-amino-acid chain; its full sequence is Zinc finger protein 593 (134 aa).

Over residues 1–25 the composition is skewed to basic residues; it reads MGRSRRTGAHRAHSLARQMKAKRRR. Disordered regions lie at residues 1-57 and 82-134; these read MGRS…DLPG and SKDH…DTST. Basic and acidic residues predominate over residues 26–36; that stretch reads PDLDEIHRELR. The segment at 61 to 85 adopts a C2H2-type zinc-finger fold; that stretch reads HRCLACARYFIDSTNLKTHFRSKDH.

This sequence belongs to the ZNF593/BUD20 C2H2-type zinc-finger protein family. Associates with pre-60S ribosomal particles. In terms of tissue distribution, ubiquitous. Detected in spleen, prostate, testis, small intestine, colon and to a minor level in thymus and peripheral blood leukocytes.

Its subcellular location is the nucleus. It is found in the nucleolus. The protein localises to the cytoplasm. In terms of biological role, involved in pre-60S ribosomal particles maturation by promoting the nuclear export of the 60S ribosome. Negatively modulates the DNA binding activity of Oct-2 and therefore its transcriptional regulatory activity. The polypeptide is Zinc finger protein 593 (ZNF593) (Homo sapiens (Human)).